A 217-amino-acid polypeptide reads, in one-letter code: D-methionine transport system permease protein MetI (217 aa).

Residues 1-19 (MSEAMMWLLVRGVWETLAM) lie on the Periplasmic side of the membrane. Positions 13-204 (VWETLAMTFV…LLVVLVYLIQ (192 aa)) constitute an ABC transmembrane type-1 domain. A helical membrane pass occupies residues 20–40 (TFVSGFFGFVIGLPVGVLLYV). The Cytoplasmic segment spans residues 41-67 (TRPGQIMENARLYRSLSAVVNIFRSIP). A helical membrane pass occupies residues 68–88 (FIILLVWMIPFTRIIVGTSIG). Residues 89–92 (LQAA) are Periplasmic-facing. A helical transmembrane segment spans residues 93–113 (IVPLTVGAAPFIARIVENALL). Residues 114–151 (EIPAGLIEASRAMGATPLQIVRKILLPEALPGLVNAAT) lie on the Cytoplasmic side of the membrane. A helical membrane pass occupies residues 152–172 (ITLITLVGYSAMGGAVGAGGL). Topologically, residues 173 to 185 (GQIGYQYGYIGYN) are periplasmic. Residues 186–206 (ATVMNTVLVLLVVLVYLIQLS) form a helical membrane-spanning segment. Topologically, residues 207–217 (GDRIVRAVTHK) are cytoplasmic.

Belongs to the binding-protein-dependent transport system permease family. CysTW subfamily.

The protein resides in the cell inner membrane. Functionally, part of the binding-protein-dependent transport system for D-methionine and the toxic methionine analog alpha-methyl-methionine. Probably responsible for the translocation of the substrate across the membrane. This Salmonella typhi protein is D-methionine transport system permease protein MetI (metI).